The chain runs to 206 residues: Cytochrome c oxidase assembly protein CtaG (206 aa).

The Cytoplasmic segment spans residues 1 to 12; sequence MSKKPAGKNSNR. A helical; Signal-anchor for type II membrane protein membrane pass occupies residues 13–35; the sequence is IVAAVCLAFFTGMIGMAYAAVPL. Over 36-206 the chain is Periplasmic; that stretch reads YKMFCQATGY…ISDTEANLGG (171 aa). The tract at residues 184-206 is disordered; sequence VASSEPVQGTSKIISDTEANLGG. Residues 188 to 206 are compositionally biased toward polar residues; sequence EPVQGTSKIISDTEANLGG.

Belongs to the COX11/CtaG family.

The protein resides in the cell inner membrane. Functionally, exerts its effect at some terminal stage of cytochrome c oxidase synthesis, probably by being involved in the insertion of the copper B into subunit I. The chain is Cytochrome c oxidase assembly protein CtaG from Mesorhizobium japonicum (strain LMG 29417 / CECT 9101 / MAFF 303099) (Mesorhizobium loti (strain MAFF 303099)).